Consider the following 536-residue polypeptide: Glutamyl-tRNA(Gln) amidotransferase subunit B, mitochondrial (536 aa).

Belongs to the GatB/GatE family. GatB subfamily. As to quaternary structure, subunit of the heterotrimeric GatFAB amidotransferase (AdT) complex, composed of A, B and F subunits.

The protein localises to the mitochondrion. It carries out the reaction L-glutamyl-tRNA(Gln) + L-glutamine + ATP + H2O = L-glutaminyl-tRNA(Gln) + L-glutamate + ADP + phosphate + H(+). In terms of biological role, allows the formation of correctly charged Gln-tRNA(Gln) through the transamidation of misacylated Glu-tRNA(Gln) in the mitochondria. The reaction takes place in the presence of glutamine and ATP through an activated gamma-phospho-Glu-tRNA(Gln). The sequence is that of Glutamyl-tRNA(Gln) amidotransferase subunit B, mitochondrial from Vanderwaltozyma polyspora (strain ATCC 22028 / DSM 70294 / BCRC 21397 / CBS 2163 / NBRC 10782 / NRRL Y-8283 / UCD 57-17) (Kluyveromyces polysporus).